We begin with the raw amino-acid sequence, 280 residues long: Aquaporin PIP2-7 (280 aa).

The residue at position 1 (M1) is an N-acetylmethionine. Over 1 to 38 (MSKEVSEEGKTHHGKDYVDPPPAPLLDMGELKSWSFYR) the chain is Cytoplasmic. K3 is modified (N6,N6-dimethyllysine). The chain crosses the membrane as a helical span at residues 39–59 (ALIAEFIATLLFLYVTVATVI). The Extracellular portion of the chain corresponds to 60–69 (GHKKQTGPCD). Residues 70–90 (GVGLLGIAWAFGGMIFVLVYC) traverse the membrane as a helical segment. Residues 91–118 (TAGISGGHINPAVTFGLFLARKVSLVRA) are Cytoplasmic-facing. Positions 100–102 (NPA) match the NPA 1 motif. Residues 119-139 (LGYMIAQCLGAICGVGFVKAF) form a helical membrane-spanning segment. At 140-160 (MKTPYNTLGGGANTVADGYSK) the chain is on the extracellular side. The helical transmembrane segment at 161 to 181 (GTALGAEIIGTFVLVYTVFSA) threads the bilayer. Residues 182-192 (TDPKRSARDSH) lie on the Cytoplasmic side of the membrane. A helical membrane pass occupies residues 193–213 (IPVLAPLPIGFAVFMVHLATI). Over 214 to 242 (PITGTGINPARSFGAAVIYNNEKAWDDQW) the chain is Extracellular. Positions 221–223 (NPA) match the NPA 2 motif. A helical membrane pass occupies residues 243–263 (IFWVGPFLGALAAAAYHQYIL). Residues 264 to 280 (RASAIKALGSFRSNATN) are Cytoplasmic-facing. Phosphoserine occurs at positions 273 and 276. A Phosphothreonine modification is found at T279.

This sequence belongs to the MIP/aquaporin (TC 1.A.8) family. PIP (TC 1.A.8.11) subfamily. Interacts with SYP61 and SYP121 in trafficking vesicles and at the plasma membrane. Highly expressed in flowers, expressed at low levels in siliques, and at low level in leaves and roots. Highly levels in elongating cells in both roots and shoots.

Its subcellular location is the cell membrane. In terms of biological role, water channel required to facilitate the transport of water across cell membrane. May be involved in the osmoregulation in plants under high osmotic stress such as under a high salt condition. The polypeptide is Aquaporin PIP2-7 (Arabidopsis thaliana (Mouse-ear cress)).